The sequence spans 305 residues: Lysosomal thioesterase PPT2 (305 aa).

Residues 1 to 32 form the signal peptide; it reads MLGLPERRLPSAEFLLLLPFLLLLLLLLPAAP. 2 cysteine pairs are disulfide-bonded: Cys-112-Cys-120 and Cys-168-Cys-179. Catalysis depends on Ser-114, which acts as the Nucleophile. The N-linked (GlcNAc...) asparagine glycan is linked to Asn-193. Active-site residues include Asp-231 and His-286. A disulfide bridge links Cys-279 with Cys-299.

It belongs to the palmitoyl-protein thioesterase family.

It localises to the lysosome. It carries out the reaction hexadecanoyl-CoA + H2O = hexadecanoate + CoA + H(+). The enzyme catalyses S-hexadecanoyl-N-acetylcysteamine + H2O = N-acetylcysteamine + hexadecanoate + H(+). Its function is as follows. Catalyzes the cleavage of thioester bonds from S-palmitoyl-CoA or S-palmitoyl-N-acetylcysteamine (unbranched structures) but does not have activity against palmitoylcysteine or palmitoylated proteins, branched structures or bulky head groups. Conversely, hydrolyzes both long and short chain fatty acyl-CoA substrate. In Bos taurus (Bovine), this protein is Lysosomal thioesterase PPT2 (PPT2).